A 182-amino-acid chain; its full sequence is Dephospho-CoA kinase (182 aa).

In terms of domain architecture, DPCK spans 4–182 (VVAITGGIGS…IINNDHKIMT (179 aa)). 12–17 (GSGKTT) contacts ATP.

This sequence belongs to the CoaE family.

It is found in the cytoplasm. The enzyme catalyses 3'-dephospho-CoA + ATP = ADP + CoA + H(+). The protein operates within cofactor biosynthesis; coenzyme A biosynthesis; CoA from (R)-pantothenate: step 5/5. Catalyzes the phosphorylation of the 3'-hydroxyl group of dephosphocoenzyme A to form coenzyme A. This is Dephospho-CoA kinase from Aliivibrio fischeri (strain ATCC 700601 / ES114) (Vibrio fischeri).